The primary structure comprises 396 residues: N-acyl-phosphatidylethanolamine-hydrolyzing phospholipase D (396 aa).

Met-1 is modified (N-acetylmethionine). 2 stretches are compositionally biased toward polar residues: residues 1–12 (MDENENSQSPAP) and 26–37 (NSVQNSGGSESS). Positions 1–41 (MDENENSQSPAPSHQYPKETLRKRQNSVQNSGGSESSRLSR) are disordered. Zn(2+) contacts are provided by His-185 and His-187. Tyr-188 serves as a coordination point for an N-acyl-1,2-diacyl-sn-glycero-3-phosphoethanolamine. Zn(2+) contacts are provided by Asp-189, His-190, and His-253. Residue Lys-256 coordinates deoxycholate. Asp-284 is a Zn(2+) binding site. An N-acyl-1,2-diacyl-sn-glycero-3-phosphoethanolamine is bound at residue His-321. His-343 is a binding site for Zn(2+). Ala-348 is a binding site for deoxycholate.

This sequence belongs to the NAPE-PLD family. In terms of assembly, homodimer. Bile acids promote the assembly of inactive monomers into an active dimer and enable catalysis. Zn(2+) serves as cofactor. In terms of tissue distribution, widely expressed. Highest expression in brain, kidney and testis (at protein level). Expressed in adipose tissue (at protein level).

The protein resides in the golgi apparatus membrane. The protein localises to the early endosome membrane. Its subcellular location is the nucleus envelope. It is found in the nucleus. It localises to the nucleoplasm. The enzyme catalyses an N-acyl-1,2-diacyl-sn-glycero-3-phosphoethanolamine + H2O = an N-acylethanolamine + a 1,2-diacyl-sn-glycero-3-phosphate + H(+). It carries out the reaction N-butanoyl-1-hexadecanoyl-2-(9Z,12Z-octadecadienoyl)-sn-glycero-3-phosphoethanolamine + H2O = N-butanoyl ethanolamine + 1-hexadecanoyl-2-(9Z,12Z-octadecadienoyl)-sn-glycero-3-phosphate + H(+). It catalyses the reaction N-hexanoyl-1-hexadecanoyl-2-(9Z,12Z-octadecadienoyl)-sn-glycero-3-phosphoethanolamine + H2O = N-hexanoyl ethanolamine + 1-hexadecanoyl-2-(9Z,12Z-octadecadienoyl)-sn-glycero-3-phosphate + H(+). The catalysed reaction is N-octanoyl-1-hexadecanoyl-2-(9Z,12Z-octadecadienoyl)-sn-glycero-3-phosphoethanolamine + H2O = N-octanoyl ethanolamine + 1-hexadecanoyl-2-(9Z,12Z-octadecadienoyl)-sn-glycero-3-phosphate + H(+). The enzyme catalyses N-decanoyl-1-hexadecanoyl-2-(9Z,12Z-octadecadienoyl)-sn-glycero-3-phosphoethanolamine + H2O = N-decanoyl ethanolamine + 1-hexadecanoyl-2-(9Z,12Z-octadecadienoyl)-sn-glycero-3-phosphate + H(+). It carries out the reaction N-dodecanoyl-1,2-di-(9Z-octadecenoyl)-sn-glycero-3-phosphoethanolamine + H2O = N-dodecanoylethanolamine + 1,2-di-(9Z-octadecenoyl)-sn-glycero-3-phosphate + H(+). It catalyses the reaction N-tetradecanoyl-1,2-di-(9Z-octadecenoyl)-sn-glycero-3-phosphoethanolamine + H2O = N-tetradecanoylethanolamine + 1,2-di-(9Z-octadecenoyl)-sn-glycero-3-phosphate + H(+). The catalysed reaction is N-hexadecanoyl-1,2-di-(9Z-octadecenoyl)-sn-glycero-3-phosphoethanolamine + H2O = N-hexadecanoylethanolamine + 1,2-di-(9Z-octadecenoyl)-sn-glycero-3-phosphate + H(+). The enzyme catalyses N,1-dihexadecanoyl-2-(9Z,12Z-octadecadienoyl)-sn-glycero-3-phosphoethanolamine + H2O = 1-hexadecanoyl-2-(9Z,12Z-octadecadienoyl)-sn-glycero-3-phosphate + N-hexadecanoylethanolamine + H(+). It carries out the reaction N-octadecanoyl-1,2-di-(9Z-octadecenoyl)-sn-glycero-3-phosphoethanolamine + H2O = N-octadecanoyl ethanolamine + 1,2-di-(9Z-octadecenoyl)-sn-glycero-3-phosphate + H(+). It catalyses the reaction N,1,2-tri-(9Z-octadecenoyl)-sn-glycero-3-phosphoethanolamine + H2O = N-(9Z-octadecenoyl) ethanolamine + 1,2-di-(9Z-octadecenoyl)-sn-glycero-3-phosphate + H(+). The catalysed reaction is N-(5Z,8Z,11Z,14Z-eicosatetraenoyl)-1,2-diacyl-sn-glycero-3-phosphoethanolamine + H2O = N-(5Z,8Z,11Z,14Z-eicosatetraenoyl)-ethanolamine + a 1,2-diacyl-sn-glycero-3-phosphate + H(+). The enzyme catalyses N-(5Z,8Z,11Z,14Z-eicosatetraenoyl)-1,2-di-(9Z-octadecenoyl)-sn-glycero-3-phosphoethanolamine + H2O = N-(5Z,8Z,11Z,14Z-eicosatetraenoyl)-ethanolamine + 1,2-di-(9Z-octadecenoyl)-sn-glycero-3-phosphate + H(+). It carries out the reaction 1-O-(1Z-octadecenoyl)-2-(9Z-octadecenoyl)-sn-glycero-3-phospho-N-hexadecanoyl-ethanolamine + H2O = 1-O-(1Z-octadecenoyl)-2-(9Z-octadecenoyl)-sn-glycero-3-phosphate + N-hexadecanoylethanolamine + H(+). It catalyses the reaction N,1-diacyl-sn-glycero-3-phosphoethanolamine + H2O = an N-acylethanolamine + a 1-acyl-sn-glycero-3-phosphate + H(+). The catalysed reaction is N,1-dihexadecanoyl-sn-glycero-3-phosphoethanolamine + H2O = N-hexadecanoylethanolamine + 1-hexadecanoyl-sn-glycero-3-phosphate + H(+). The enzyme catalyses N-(5Z,8Z,11Z,14Z-eicosatetraenoyl)-1-(9Z-octadecenoyl)-sn-glycero-3-phosphoethanolamine + H2O = N-(5Z,8Z,11Z,14Z-eicosatetraenoyl)-ethanolamine + 1-(9Z-octadecenoyl)-sn-glycero-3-phosphate + H(+). Activated by divalent cations. Activated by bile acids. Activated by membrane phospholipids such as phosphatidylethanolamines. Inhibited by cardiolipins. In terms of biological role, D-type phospholipase that hydrolyzes N-acyl-phosphatidylethanolamines (NAPEs) to produce bioactive N-acylethanolamines/fatty acid ethanolamides (NAEs/FAEs) and phosphatidic acid. Cleaves the terminal phosphodiester bond of diacyl- and alkenylacyl-NAPEs, primarily playing a role in the generation of long-chain saturated and monounsaturated NAEs in the brain. May control NAPE homeostasis in dopaminergic neuron membranes and regulate neuron survival, partly through RAC1 activation. As a regulator of lipid metabolism in the adipose tissue, mediates the crosstalk between adipocytes, gut microbiota and immune cells to control body temperature and weight. In particular, regulates energy homeostasis by promoting cold-induced brown or beige adipocyte differentiation program to generate heat from fatty acids and glucose. Has limited D-type phospholipase activity toward N-acyl lyso-NAPEs. The protein is N-acyl-phosphatidylethanolamine-hydrolyzing phospholipase D (Napepld) of Rattus norvegicus (Rat).